A 587-amino-acid polypeptide reads, in one-letter code: Putative gustatory receptor 59b (587 aa).

Residues 1–4 (MPSY) are Cytoplasmic-facing. Residues 5–25 (MAFTPYIMFSTNYAAIAYILI) form a helical membrane-spanning segment. At 26–62 (SRCYRDSMLLDLQRITLEVNREMLRTGKKMNSLIRRM) the chain is on the extracellular side. Residues 63–83 (FFLKTFTLTYSCLSYILAVLV) form a helical membrane-spanning segment. Residues 84-97 (YQWRAQNWSNLFNG) lie on the Cytoplasmic side of the membrane. A helical membrane pass occupies residues 98 to 118 (LLVNISLTILVVTTFFYFVSL). Over 119-277 (MHVARGFDFV…CGLYPVNKAK (159 aa)) the chain is Extracellular. The N-linked (GlcNAc...) asparagine glycan is linked to Asn159. A helical transmembrane segment spans residues 278 to 298 (WLEMVASIVVHSIMLFQFHLV). Over 299 to 309 (MRGGYTTLFSR) the chain is Cytoplasmic. The chain crosses the membrane as a helical span at residues 310-330 (TYALLANIITLTMLPIVMWQV). Topologically, residues 331–403 (RSVFLAKRHY…GIDGVRRSLR (73 aa)) are extracellular. Residues 404–424 (ILLFVKFFTLSWLCITDIIFL) traverse the membrane as a helical segment. Residues 425 to 518 (FYSSDAVIWV…IYAPQMLATR (94 aa)) are Cytoplasmic-facing. A helical membrane pass occupies residues 519–539 (FDHFVIGVIQAYWGAVFTFDL). At 540–587 (STSFLWVVYGSVQYHVRSLDYYLIDYMCDVAVEYHDSARHSWSEKECY) the chain is on the extracellular side.

It belongs to the insect chemoreceptor superfamily. Gustatory receptor (GR) family. Gr22e subfamily.

The protein localises to the cell membrane. Its function is as follows. Probable gustatory receptor which mediates acceptance or avoidance behavior, depending on its substrates. The protein is Putative gustatory receptor 59b of Drosophila erecta (Fruit fly).